A 597-amino-acid chain; its full sequence is Elongation factor 4 (597 aa).

One can recognise a tr-type G domain in the interval 2–184 (KNIRNFSIIA…TMIAKIPPPV (183 aa)). GTP is bound by residues 14–19 (DHGKST) and 131–134 (NKID).

The protein belongs to the TRAFAC class translation factor GTPase superfamily. Classic translation factor GTPase family. LepA subfamily.

Its subcellular location is the cell inner membrane. It catalyses the reaction GTP + H2O = GDP + phosphate + H(+). In terms of biological role, required for accurate and efficient protein synthesis under certain stress conditions. May act as a fidelity factor of the translation reaction, by catalyzing a one-codon backward translocation of tRNAs on improperly translocated ribosomes. Back-translocation proceeds from a post-translocation (POST) complex to a pre-translocation (PRE) complex, thus giving elongation factor G a second chance to translocate the tRNAs correctly. Binds to ribosomes in a GTP-dependent manner. This chain is Elongation factor 4, found in Methylobacillus flagellatus (strain ATCC 51484 / DSM 6875 / VKM B-1610 / KT).